A 509-amino-acid chain; its full sequence is DNA nucleotidylexotransferase (509 aa).

The disordered stretch occupies residues 1–25 (MDPLCTASSGPRKKRPRQVGASMAS). A Nuclear localization signal motif is present at residues 11 to 17 (PRKKRPR). Residues 27–124 (PHDIKFQNLV…KPVEITGKHQ (98 aa)) form the BRCT domain. The mediates interaction with DNTTIP2 stretch occupies residues 151–509 (SQYACQRKTT…DYIEPWERNA (359 aa)). Residues 258–262 (VGLKT) form an involved in DNA binding region. Residues 333–338 (GFRRGK) and 342–345 (HDVD) each bind a 2'-deoxyribonucleoside 5'-triphosphate. Aspartate 343, aspartate 345, and aspartate 433 together coordinate Mg(2+). 448–449 (GW) is a binding site for a 2'-deoxyribonucleoside 5'-triphosphate.

It belongs to the DNA polymerase type-X family. As to quaternary structure, interacts with PRP19 and DNTTIP1. Forms a ternary complex with DNTTIP2 and core histone. Released from this complex by PCNA. Interacts with TRERF1. The cofactor is Mg(2+).

It is found in the nucleus. It carries out the reaction DNA(n) + a 2'-deoxyribonucleoside 5'-triphosphate = DNA(n+1) + diphosphate. Its function is as follows. Template-independent DNA polymerase which catalyzes the random addition of deoxynucleoside 5'-triphosphate to the 3'-end of a DNA initiator. One of the in vivo functions of this enzyme is the addition of nucleotides at the junction (N region) of rearranged Ig heavy chain and T-cell receptor gene segments during the maturation of B- and T-cells. This chain is DNA nucleotidylexotransferase (DNTT), found in Bos taurus (Bovine).